Reading from the N-terminus, the 646-residue chain is Acetyl-coenzyme A synthetase (646 aa).

Residues 190–193 and Thr-309 contribute to the CoA site; that span reads RAGN. ATP contacts are provided by residues 385 to 387, 409 to 414, Asp-498, and Arg-513; these read GEP and DTWWQT. Ser-521 provides a ligand contact to CoA. Arg-524 serves as a coordination point for ATP. Mg(2+) contacts are provided by Val-535, His-537, and Val-540. Arg-582 contributes to the CoA binding site. Lys-607 carries the post-translational modification N6-acetyllysine.

This sequence belongs to the ATP-dependent AMP-binding enzyme family. Mg(2+) is required as a cofactor. Post-translationally, acetylated. Deacetylation by the SIR2-homolog deacetylase activates the enzyme.

The enzyme catalyses acetate + ATP + CoA = acetyl-CoA + AMP + diphosphate. Functionally, catalyzes the conversion of acetate into acetyl-CoA (AcCoA), an essential intermediate at the junction of anabolic and catabolic pathways. AcsA undergoes a two-step reaction. In the first half reaction, AcsA combines acetate with ATP to form acetyl-adenylate (AcAMP) intermediate. In the second half reaction, it can then transfer the acetyl group from AcAMP to the sulfhydryl group of CoA, forming the product AcCoA. This chain is Acetyl-coenzyme A synthetase, found in Pseudoalteromonas translucida (strain TAC 125).